The chain runs to 66 residues: Large ribosomal subunit protein bL33c (66 aa).

The protein belongs to the bacterial ribosomal protein bL33 family.

It is found in the plastid. Its subcellular location is the chloroplast. This is Large ribosomal subunit protein bL33c from Lepidium virginicum (Virginia pepperweed).